An 813-amino-acid polypeptide reads, in one-letter code: Ribosome-releasing factor 2, mitochondrial (813 aa).

A mitochondrion-targeting transit peptide spans 1–20 (MLRIVWKPLKIRLPVWRRYQ). One can recognise a tr-type G domain in the interval 26-314 (NSIRNVGIIA…AIIDYLPSPV (289 aa)). GTP contacts are provided by residues 35–42 (AHIDAGKT), 99–103 (DTPGH), and 153–156 (NKMD).

It belongs to the TRAFAC class translation factor GTPase superfamily. Classic translation factor GTPase family. EF-G/EF-2 subfamily.

The protein localises to the mitochondrion. Functionally, mitochondrial GTPase that mediates the disassembly of ribosomes from messenger RNA at the termination of mitochondrial protein biosynthesis. Not involved in the GTP-dependent ribosomal translocation step during translation elongation. The polypeptide is Ribosome-releasing factor 2, mitochondrial (mef2) (Schizosaccharomyces pombe (strain 972 / ATCC 24843) (Fission yeast)).